Here is a 131-residue protein sequence, read N- to C-terminus: Large ribosomal subunit protein bL17 (131 aa).

Belongs to the bacterial ribosomal protein bL17 family. As to quaternary structure, part of the 50S ribosomal subunit. Contacts protein L32.

This chain is Large ribosomal subunit protein bL17, found in Burkholderia multivorans (strain ATCC 17616 / 249).